Here is a 349-residue protein sequence, read N- to C-terminus: UDP-N-acetylenolpyruvoylglucosamine reductase (349 aa).

Residues 26–197 (FDARARVAAR…VAVTFRLPKA (172 aa)) form the FAD-binding PCMH-type domain. Arginine 173 is an active-site residue. The Proton donor role is filled by serine 249. Glutamate 345 is an active-site residue.

The protein belongs to the MurB family. FAD is required as a cofactor.

The protein resides in the cytoplasm. The enzyme catalyses UDP-N-acetyl-alpha-D-muramate + NADP(+) = UDP-N-acetyl-3-O-(1-carboxyvinyl)-alpha-D-glucosamine + NADPH + H(+). It participates in cell wall biogenesis; peptidoglycan biosynthesis. Cell wall formation. This chain is UDP-N-acetylenolpyruvoylglucosamine reductase, found in Burkholderia pseudomallei (strain 1710b).